A 339-amino-acid polypeptide reads, in one-letter code: Catalase-related peroxidase (339 aa).

The N-terminal stretch at 1–31 is a signal peptide; that stretch reads MIRIRNRWFRWLAIALASLVASIGIATVGFA. Residue His58 is part of the active site. Tyr328 is a heme binding site.

Belongs to the catalase family. The cofactor is heme.

Its subcellular location is the periplasm. Has an organic peroxide-dependent peroxidase activity. This Synechococcus elongatus (strain ATCC 33912 / PCC 7942 / FACHB-805) (Anacystis nidulans R2) protein is Catalase-related peroxidase (srpA).